Reading from the N-terminus, the 286-residue chain is MSGLYNNSSYFSPARAASPQIRSTPEIDSSQYLTELLAEHQKLTPFMQVLPICSRLLNQEMFRVSGMMSNQGFGDFDRLRHRSPSPMASSNLMSNVSNTGLGGWNGLSQERLSGTPGMTMDWQGAPGSPSSYTVKRILRLEIPVDNYPNFNFVGRLLGPRGNSLKRVEATTGCRVFIRGKGSIKDPEKEDKLRGRPGYEHLNEQLHILIEADLPASIVEIRLRQAQEIIEELLKPVDESQDFIKRQQLRELALLNSNNLREESPGPSGGGSVSPFNSSGKRPKTGC.

Ser-2 is subject to N-acetylserine. Residues 141 to 208 (EIPVDNYPNF…EHLNEQLHIL (68 aa)) enclose the KH domain. Positions 256–286 (SNNLREESPGPSGGGSVSPFNSSGKRPKTGC) are disordered. 2 positions are modified to phosphoserine: Ser-263 and Ser-273.

Its subcellular location is the nucleus. This chain is KH domain-containing protein At2g38610, found in Arabidopsis thaliana (Mouse-ear cress).